The following is a 218-amino-acid chain: Monomethylamine corrinoid protein 2 (218 aa).

One can recognise a B12-binding N-terminal domain in the interval 1 to 91; the sequence is MTNTEIFNKL…ELEKTKVEGE (91 aa). Residues 94-218 form the B12-binding domain; sequence TGLAITFVAE…AAKVALNVMK (125 aa). Position 107 (His107) interacts with methylcob(III)alamin.

Belongs to the methylamine corrinoid protein family. In terms of assembly, can form a complex with MtmB.

It participates in one-carbon metabolism; methanogenesis from methylamine. Functionally, acts as a methyl group carrier between MtmB and MtbA. This chain is Monomethylamine corrinoid protein 2 (mtmC2), found in Methanosarcina mazei (strain ATCC BAA-159 / DSM 3647 / Goe1 / Go1 / JCM 11833 / OCM 88) (Methanosarcina frisia).